Reading from the N-terminus, the 813-residue chain is Ribonuclease R (813 aa).

Residues 260–587 enclose the RNB domain; sequence RVDLRDLPLV…LHRAIKYLLA (328 aa). K544 is modified (N6-acetyllysine). The S1 motif domain maps to 644–725; sequence GNVFKGVISS…DERKIDFSLI (82 aa). The segment at 733–813 is disordered; the sequence is NVGKTAREKA…KRAAKKKVAE (81 aa). Basic and acidic residues-rich tracts occupy residues 737–749 and 761–774; these read TAREKAKKGDAGK and VNFEPDSAFRGEKK. Basic residues predominate over residues 775–791; that stretch reads TKPKAAKKDARKAKKPS. The segment covering 792 to 801 has biased composition (low complexity); the sequence is AKTQKIAAAT. The span at 802–813 shows a compositional bias: basic residues; it reads KAKRAAKKKVAE.

The protein belongs to the RNR ribonuclease family. RNase R subfamily. In terms of assembly, monomer.

It localises to the cytoplasm. It carries out the reaction Exonucleolytic cleavage in the 3'- to 5'-direction to yield nucleoside 5'-phosphates.. In terms of biological role, 3'-5' exoribonuclease that releases 5'-nucleoside monophosphates and is involved in maturation of structured RNAs. Required for the expression of virulence genes on the large plasmid of S.flexneri at the post-transcriptional level. The polypeptide is Ribonuclease R (Shigella flexneri).